A 96-amino-acid polypeptide reads, in one-letter code: Protein Vpr (96 aa).

Positions 1–42 (MEQAPENQGPQREPYNEWTLELLEELKSEAVRHFPRIWLHSL) are homooligomerization. Phosphoserine; by host occurs at positions 79, 94, and 96.

Belongs to the HIV-1 VPR protein family. Homooligomer, may form homodimer. Interacts with p6-gag region of the Pr55 Gag precursor protein through a (Leu-X-X)4 motif near the C-terminus of the P6gag protein. Interacts with host UNG. May interact with host RAD23A/HHR23A. Interacts with host VPRBP/DCAF1, leading to hijack the CUL4A-RBX1-DDB1-DCAF1/VPRBP complex, mediating ubiquitination of host proteins such as TERT and ZGPAT and arrest of the cell cycle in G2 phase. In terms of processing, phosphorylated on several residues by host. These phosphorylations regulate VPR activity for the nuclear import of the HIV-1 pre-integration complex.

Its subcellular location is the virion. The protein resides in the host nucleus. It is found in the host extracellular space. Its function is as follows. During virus replication, may deplete host UNG protein, and incude G2-M cell cycle arrest. Acts by targeting specific host proteins for degradation by the 26S proteasome, through association with the cellular CUL4A-DDB1 E3 ligase complex by direct interaction with host VPRPB/DCAF-1. Cell cycle arrest reportedly occurs within hours of infection and is not blocked by antiviral agents, suggesting that it is initiated by the VPR carried into the virion. Additionally, VPR induces apoptosis in a cell cycle dependent manner suggesting that these two effects are mechanistically linked. Detected in the serum and cerebrospinal fluid of AIDS patient, VPR may also induce cell death to bystander cells. In terms of biological role, during virus entry, plays a role in the transport of the viral pre-integration (PIC) complex to the host nucleus. This function is crucial for viral infection of non-dividing macrophages. May act directly at the nuclear pore complex, by binding nucleoporins phenylalanine-glycine (FG)-repeat regions. The sequence is that of Protein Vpr from Human immunodeficiency virus type 1 group M subtype B (isolate SF33) (HIV-1).